The sequence spans 157 residues: ATP synthase subunit b (157 aa).

The chain crosses the membrane as a helical span at residues 7–27 (LIAQLVVFFILAWVTMKFVWP).

This sequence belongs to the ATPase B chain family. As to quaternary structure, F-type ATPases have 2 components, F(1) - the catalytic core - and F(0) - the membrane proton channel. F(1) has five subunits: alpha(3), beta(3), gamma(1), delta(1), epsilon(1). F(0) has three main subunits: a(1), b(2) and c(10-14). The alpha and beta chains form an alternating ring which encloses part of the gamma chain. F(1) is attached to F(0) by a central stalk formed by the gamma and epsilon chains, while a peripheral stalk is formed by the delta and b chains.

The protein localises to the cell inner membrane. Functionally, f(1)F(0) ATP synthase produces ATP from ADP in the presence of a proton or sodium gradient. F-type ATPases consist of two structural domains, F(1) containing the extramembraneous catalytic core and F(0) containing the membrane proton channel, linked together by a central stalk and a peripheral stalk. During catalysis, ATP synthesis in the catalytic domain of F(1) is coupled via a rotary mechanism of the central stalk subunits to proton translocation. In terms of biological role, component of the F(0) channel, it forms part of the peripheral stalk, linking F(1) to F(0). The chain is ATP synthase subunit b from Aromatoleum aromaticum (strain DSM 19018 / LMG 30748 / EbN1) (Azoarcus sp. (strain EbN1)).